The sequence spans 1058 residues: Carbamoyl phosphate synthase large chain (1058 aa).

The carboxyphosphate synthetic domain stretch occupies residues 1–401 (MPKRTDIQKI…SLLKACRSLE (401 aa)). 12 residues coordinate ATP: R129, R169, G175, G176, R208, I210, E215, G241, I242, H243, Q284, and E298. An ATP-grasp 1 domain is found at 133–327 (KQLMEELEQP…IAKLAAKIAV (195 aa)). The Mg(2+) site is built by Q284, E298, and N300. Positions 284, 298, and 300 each coordinate Mn(2+). The tract at residues 402 to 546 (IGVHHNEIPE…YSTYGWENES (145 aa)) is oligomerization domain. Positions 547 to 929 (IRSDKESVLV…ALYKAFEASY (383 aa)) are carbamoyl phosphate synthetic domain. The ATP-grasp 2 domain occupies 671–861 (EQALKELDIP…MAQVATKLIL (191 aa)). 10 residues coordinate ATP: R707, S746, I748, E752, G777, V778, H779, S780, Q820, and E832. Q820, E832, and N834 together coordinate Mg(2+). 3 residues coordinate Mn(2+): Q820, E832, and N834. Residues 930–1058 (LHLPTFGNVV…ESRSFVTEAI (129 aa)) enclose the MGS-like domain. The tract at residues 930-1058 (LHLPTFGNVV…ESRSFVTEAI (129 aa)) is allosteric domain.

Belongs to the CarB family. In terms of assembly, composed of two chains; the small (or glutamine) chain promotes the hydrolysis of glutamine to ammonia, which is used by the large (or ammonia) chain to synthesize carbamoyl phosphate. Tetramer of heterodimers (alpha,beta)4. Mg(2+) serves as cofactor. The cofactor is Mn(2+).

The enzyme catalyses hydrogencarbonate + L-glutamine + 2 ATP + H2O = carbamoyl phosphate + L-glutamate + 2 ADP + phosphate + 2 H(+). The catalysed reaction is hydrogencarbonate + NH4(+) + 2 ATP = carbamoyl phosphate + 2 ADP + phosphate + 2 H(+). It functions in the pathway amino-acid biosynthesis; L-arginine biosynthesis; carbamoyl phosphate from bicarbonate: step 1/1. The protein operates within pyrimidine metabolism; UMP biosynthesis via de novo pathway; (S)-dihydroorotate from bicarbonate: step 1/3. Large subunit of the glutamine-dependent carbamoyl phosphate synthetase (CPSase). CPSase catalyzes the formation of carbamoyl phosphate from the ammonia moiety of glutamine, carbonate, and phosphate donated by ATP, constituting the first step of 2 biosynthetic pathways, one leading to arginine and/or urea and the other to pyrimidine nucleotides. The large subunit (synthetase) binds the substrates ammonia (free or transferred from glutamine from the small subunit), hydrogencarbonate and ATP and carries out an ATP-coupled ligase reaction, activating hydrogencarbonate by forming carboxy phosphate which reacts with ammonia to form carbamoyl phosphate. The protein is Carbamoyl phosphate synthase large chain of Streptococcus pneumoniae (strain ATCC BAA-255 / R6).